A 150-amino-acid chain; its full sequence is Ribosome maturation factor RimP (150 aa).

This sequence belongs to the RimP family.

The protein localises to the cytoplasm. In terms of biological role, required for maturation of 30S ribosomal subunits. This Francisella tularensis subsp. mediasiatica (strain FSC147) protein is Ribosome maturation factor RimP.